The sequence spans 431 residues: 5-methylthioadenosine/S-adenosylhomocysteine deaminase (431 aa).

Residues H61 and H63 each coordinate Zn(2+). Substrate contacts are provided by E90 and H183. H210 is a binding site for Zn(2+). The substrate site is built by E213 and D298. D298 serves as a coordination point for Zn(2+).

Belongs to the metallo-dependent hydrolases superfamily. MTA/SAH deaminase family. Zn(2+) is required as a cofactor.

It carries out the reaction S-adenosyl-L-homocysteine + H2O + H(+) = S-inosyl-L-homocysteine + NH4(+). It catalyses the reaction S-methyl-5'-thioadenosine + H2O + H(+) = S-methyl-5'-thioinosine + NH4(+). Catalyzes the deamination of 5-methylthioadenosine and S-adenosyl-L-homocysteine into 5-methylthioinosine and S-inosyl-L-homocysteine, respectively. Is also able to deaminate adenosine. The chain is 5-methylthioadenosine/S-adenosylhomocysteine deaminase from Halobacterium salinarum (strain ATCC 700922 / JCM 11081 / NRC-1) (Halobacterium halobium).